The chain runs to 538 residues: Phosphoenolpyruvate carboxykinase (ATP) (538 aa).

Substrate contacts are provided by R61, Y195, and K201. ATP-binding positions include K201, H220, and 236 to 244; that span reads GLSGTGKTT. The Mn(2+) site is built by K201 and H220. D257 contributes to the Mn(2+) binding site. Positions 285, 323, and 449 each coordinate ATP. R323 provides a ligand contact to substrate.

This sequence belongs to the phosphoenolpyruvate carboxykinase (ATP) family. Requires Mn(2+) as cofactor.

Its subcellular location is the cytoplasm. The catalysed reaction is oxaloacetate + ATP = phosphoenolpyruvate + ADP + CO2. It participates in carbohydrate biosynthesis; gluconeogenesis. Functionally, involved in the gluconeogenesis. Catalyzes the conversion of oxaloacetate (OAA) to phosphoenolpyruvate (PEP) through direct phosphoryl transfer between the nucleoside triphosphate and OAA. In Nitrobacter winogradskyi (strain ATCC 25391 / DSM 10237 / CIP 104748 / NCIMB 11846 / Nb-255), this protein is Phosphoenolpyruvate carboxykinase (ATP).